We begin with the raw amino-acid sequence, 528 residues long: Major facilitator-type transporter psiT2 (528 aa).

Residues 1-20 (MSPERSASLEPDEHSSLLSD) are disordered. 5 helical membrane passes run 87–107 (FYSGLIESVFACGEVCSIFML), 125–145 (LGVALFTALFGLSTSFTMMLV), 148–168 (VCAGLLAGATPIVHSVVSELT), 174–194 (ALVVPLYGLITPIGFAIGPLI), and 220–240 (FLPSFVPCCLAVVGVTFGYFF). Over residues 260–270 (STSSISSRTST) the composition is skewed to low complexity. Residues 260–299 (STSSISSRTSTLYGATDDHNRDASESTALSPEEAEDEIDS) are disordered. The next 6 helical transmembrane spans lie at 322-342 (FLMFLYTSSDVLFSLYCFTAV), 357-377 (AFSVAGVIAMLMQLCITPWVL), 388-408 (FCMFSFPLVFALMGCLNPLAQ), 424-444 (GLLYAAIAVLLLLARVCVMAF), 460-479 (LATANGLVQVSMTIARALCP), and 493-513 (NILGGHLWVLIMVTISLAGVW).

It belongs to the major facilitator superfamily. TCR/Tet family.

It localises to the membrane. In terms of biological role, major facilitator-type transporter; part of the gene cluster that mediates the biosynthesis of psilocybin, a psychotropic tryptamine-derived natural product. The sequence is that of Major facilitator-type transporter psiT2 from Psilocybe cyanescens.